Reading from the N-terminus, the 205-residue chain is Type-4 uracil-DNA glycosylase (205 aa).

Residues C13 and C16 each contribute to the [4Fe-4S] cluster site. Uracil is bound by residues 40–42, F54, and N80; that span reads GEG. [4Fe-4S] cluster contacts are provided by C84 and C100. H155 contributes to the uracil binding site.

It belongs to the uracil-DNA glycosylase (UDG) superfamily. Type 4 (UDGa) family. As to quaternary structure, monomer.

It carries out the reaction Hydrolyzes single-stranded DNA or mismatched double-stranded DNA and polynucleotides, releasing free uracil.. With respect to regulation, product-inhibited by apurinic/apyrimidinic sites. Functionally, removes uracil bases that are present in DNA as a result of either deamination of cytosine or misincorporation of dUMP instead of dTMP. Can remove uracil from double-stranded DNA containing either a U/G, U/A, U/C or U/T base pair as well as from single-stranded DNA. Specifically recognizes uracil that is flipped out from double-stranded DNA. The protein is Type-4 uracil-DNA glycosylase of Thermus thermophilus (strain ATCC 27634 / DSM 579 / HB8).